Here is a 191-residue protein sequence, read N- to C-terminus: Prostaglandin-H2 D-isomerase (191 aa).

The signal sequence occupies residues 1 to 24; that stretch reads MATPNRPWMGLLLLGVLGVLQTPA. The N-linked (GlcNAc...) asparagine glycan is linked to Asn-51. Cys-65 functions as the Nucleophile in the catalytic mechanism. The N-linked (GlcNAc...) asparagine glycan is linked to Asn-78. A disulfide bridge connects residues Cys-89 and Cys-186.

This sequence belongs to the calycin superfamily. Lipocalin family. Monomer. In terms of tissue distribution, in the male reproductive system, it is expressed in the testis and epididymis, and is secreted into the seminal fluid.

Its subcellular location is the rough endoplasmic reticulum. It is found in the nucleus membrane. The protein localises to the golgi apparatus. The protein resides in the cytoplasm. It localises to the perinuclear region. Its subcellular location is the secreted. It carries out the reaction prostaglandin H2 = prostaglandin D2. Functionally, catalyzes the conversion of PGH2 to PGD2, a prostaglandin involved in smooth muscle contraction/relaxation and a potent inhibitor of platelet aggregation. Involved in a variety of CNS functions, such as sedation, NREM sleep and PGE2-induced allodynia, and may have an anti-apoptotic role in oligodendrocytes. Binds small non-substrate lipophilic molecules, including biliverdin, bilirubin, retinal, retinoic acid and thyroid hormone, and may act as a scavenger for harmful hydrophobic molecules and as a secretory retinoid and thyroid hormone transporter. Possibly involved in development and maintenance of the blood-brain, blood-retina, blood-aqueous humor and blood-testis barrier. It is likely to play important roles in both maturation and maintenance of the central nervous system and male reproductive system. Involved in PLA2G3-dependent maturation of mast cells. PLA2G3 is secreted by immature mast cells and acts on nearby fibroblasts upstream to PTDGS to synthesize PGD2, which in turn promotes mast cell maturation and degranulation via PTGDR. In Ovis aries (Sheep), this protein is Prostaglandin-H2 D-isomerase (PTGDS).